The sequence spans 414 residues: Histidine--tRNA ligase (414 aa).

This sequence belongs to the class-II aminoacyl-tRNA synthetase family. Homodimer.

The protein resides in the cytoplasm. The enzyme catalyses tRNA(His) + L-histidine + ATP = L-histidyl-tRNA(His) + AMP + diphosphate + H(+). The polypeptide is Histidine--tRNA ligase (Rickettsia conorii (strain ATCC VR-613 / Malish 7)).